The primary structure comprises 508 residues: Steroid 17-alpha-hydroxylase/17,20 lyase (508 aa).

Residue asparagine 202 participates in substrate binding. Residue cysteine 442 participates in heme binding.

Belongs to the cytochrome P450 family. Heme serves as cofactor.

The protein resides in the endoplasmic reticulum membrane. It is found in the microsome membrane. The catalysed reaction is a C21-steroid + reduced [NADPH--hemoprotein reductase] + O2 = a 17alpha-hydroxy-C21-steroid + oxidized [NADPH--hemoprotein reductase] + H2O + H(+). The enzyme catalyses progesterone + reduced [NADPH--hemoprotein reductase] + O2 = 17alpha-hydroxyprogesterone + oxidized [NADPH--hemoprotein reductase] + H2O + H(+). It catalyses the reaction pregnenolone + reduced [NADPH--hemoprotein reductase] + O2 = 17alpha-hydroxypregnenolone + oxidized [NADPH--hemoprotein reductase] + H2O + H(+). It carries out the reaction 17alpha-hydroxyprogesterone + reduced [NADPH--hemoprotein reductase] + O2 = androst-4-ene-3,17-dione + acetate + oxidized [NADPH--hemoprotein reductase] + H2O + 2 H(+). The catalysed reaction is 17alpha-hydroxyprogesterone + reduced [NADPH--hemoprotein reductase] + O2 = 16alpha,17alpha-dihydroxyprogesterone + oxidized [NADPH--hemoprotein reductase] + H2O + H(+). The enzyme catalyses 16alpha,17alpha-dihydroxyprogesterone + reduced [NADPH--hemoprotein reductase] + O2 = 6beta,16alpha,17alpha-trihydroxyprogesterone + oxidized [NADPH--hemoprotein reductase] + H2O + H(+). It catalyses the reaction 17alpha-hydroxypregnenolone + reduced [NADPH--hemoprotein reductase] + O2 = 3beta-hydroxyandrost-5-en-17-one + acetate + oxidized [NADPH--hemoprotein reductase] + H2O + 2 H(+). It carries out the reaction 16alpha,17alpha-dihydroxypregnenolone + reduced [NADPH--hemoprotein reductase] + O2 = 3beta,16alpha-dihydroxy-androst-5-en-17-one + acetate + oxidized [NADPH--hemoprotein reductase] + H2O + 2 H(+). The catalysed reaction is 3beta-hydroxyandrost-5-en-17-one + reduced [NADPH--hemoprotein reductase] + O2 = 3beta,16alpha-dihydroxy-androst-5-en-17-one + oxidized [NADPH--hemoprotein reductase] + H2O + H(+). The enzyme catalyses androst-4-ene-3,17-dione + reduced [NADPH--hemoprotein reductase] + O2 = 16alpha-hydroxyandrost-4-ene-3,17-dione + oxidized [NADPH--hemoprotein reductase] + H2O + H(+). It functions in the pathway steroid hormone biosynthesis. The protein operates within steroid biosynthesis; glucocorticoid biosynthesis. Regulated predominantly by intracellular cAMP levels. The 17,20-lyase activity is stimulated by cytochrome b5, which acts as an allosteric effector increasing the Vmax of the lyase activity. In terms of biological role, a cytochrome P450 monooxygenase involved in corticoid and androgen biosynthesis. Catalyzes 17-alpha hydroxylation of C21 steroids, which is common for both pathways. A second oxidative step, required only for androgen synthesis, involves an acyl-carbon cleavage. The 17-alpha hydroxy intermediates, as part of adrenal glucocorticoids biosynthesis pathway, are precursors of cortisol. Hydroxylates steroid hormones, pregnenolone and progesterone to form 17-alpha hydroxy metabolites, followed by the cleavage of the C17-C20 bond to form C19 steroids, dehydroepiandrosterone (DHEA) and androstenedione. Has 16-alpha hydroxylase activity. Catalyzes 16-alpha hydroxylation of 17-alpha hydroxy pregnenolone, followed by the cleavage of the C17-C20 bond to form 16-alpha-hydroxy DHEA. Also 16-alpha hydroxylates androgens, relevant for estriol synthesis. Mechanistically, uses molecular oxygen inserting one oxygen atom into a substrate, and reducing the second into a water molecule, with two electrons provided by NADPH via cytochrome P450 reductase (CPR; NADPH-ferrihemoprotein reductase). This is Steroid 17-alpha-hydroxylase/17,20 lyase (CYP17A1) from Pan troglodytes (Chimpanzee).